The following is a 397-amino-acid chain: Elongation factor Tu (397 aa).

Residues 10-206 (KPHCNIGTIG…TIDEYVPDPE (197 aa)) form the tr-type G domain. The G1 stretch occupies residues 19–26 (GHVDHGKT). 19 to 26 (GHVDHGKT) is a GTP binding site. Thr26 provides a ligand contact to Mg(2+). The tract at residues 61–65 (GITIS) is G2. A G3 region spans residues 82–85 (DCPG). Residues 82 to 86 (DCPGH) and 137 to 140 (NKCD) each bind GTP. The interval 137 to 140 (NKCD) is G4. Positions 175–177 (SAL) are G5.

It belongs to the TRAFAC class translation factor GTPase superfamily. Classic translation factor GTPase family. EF-Tu/EF-1A subfamily. Monomer.

The protein resides in the cytoplasm. It catalyses the reaction GTP + H2O = GDP + phosphate + H(+). GTP hydrolase that promotes the GTP-dependent binding of aminoacyl-tRNA to the A-site of ribosomes during protein biosynthesis. The chain is Elongation factor Tu from Lachnospira eligens (strain ATCC 27750 / DSM 3376 / VPI C15-48 / C15-B4) (Eubacterium eligens).